The sequence spans 373 residues: GTPase Obg (373 aa).

The region spanning 1 to 159 (MKFIDEARIE…RMVRLELKVL (159 aa)) is the Obg domain. The segment at 128 to 147 (LHFKSSTNRAPRQKTDGKPG) is disordered. The 175-residue stretch at 160-334 (ADVGLLGMPN…LCYAVFDHIS (175 aa)) folds into the OBG-type G domain. Residues 166–173 (GMPNAGKS), 191–195 (FTTLA), 213–216 (DIPG), 284–287 (NKLD), and 315–317 (SAL) each bind GTP. Mg(2+)-binding residues include serine 173 and threonine 193. Positions 354–373 (FREKPQAPAAADDAGTDPQV) are disordered. The span at 359–373 (QAPAAADDAGTDPQV) shows a compositional bias: low complexity.

Belongs to the TRAFAC class OBG-HflX-like GTPase superfamily. OBG GTPase family. In terms of assembly, monomer. The cofactor is Mg(2+).

It is found in the cytoplasm. An essential GTPase which binds GTP, GDP and possibly (p)ppGpp with moderate affinity, with high nucleotide exchange rates and a fairly low GTP hydrolysis rate. Plays a role in control of the cell cycle, stress response, ribosome biogenesis and in those bacteria that undergo differentiation, in morphogenesis control. In Paraburkholderia phytofirmans (strain DSM 17436 / LMG 22146 / PsJN) (Burkholderia phytofirmans), this protein is GTPase Obg.